The chain runs to 427 residues: 3-phosphoshikimate 1-carboxyvinyltransferase (427 aa).

K22, S23, and R27 together coordinate 3-phosphoshikimate. Position 22 (K22) interacts with phosphoenolpyruvate. Positions 96 and 124 each coordinate phosphoenolpyruvate. The 3-phosphoshikimate site is built by S169, S170, Q171, S197, D313, N336, and K340. A phosphoenolpyruvate-binding site is contributed by Q171. The active-site Proton acceptor is D313. R344, R386, and K411 together coordinate phosphoenolpyruvate.

It belongs to the EPSP synthase family. As to quaternary structure, monomer.

It is found in the cytoplasm. It catalyses the reaction 3-phosphoshikimate + phosphoenolpyruvate = 5-O-(1-carboxyvinyl)-3-phosphoshikimate + phosphate. Its pathway is metabolic intermediate biosynthesis; chorismate biosynthesis; chorismate from D-erythrose 4-phosphate and phosphoenolpyruvate: step 6/7. Functionally, catalyzes the transfer of the enolpyruvyl moiety of phosphoenolpyruvate (PEP) to the 5-hydroxyl of shikimate-3-phosphate (S3P) to produce enolpyruvyl shikimate-3-phosphate and inorganic phosphate. This Shigella dysenteriae protein is 3-phosphoshikimate 1-carboxyvinyltransferase.